A 1108-amino-acid polypeptide reads, in one-letter code: Retinal guanylyl cyclase 2 (1108 aa).

An N-terminal signal peptide occupies residues 1–50 (MFLGPWPFSRLLSWFAISSRLSGQHGLPSSKFLRCLCLLALLPLLRWGQA). The Extracellular segment spans residues 51 to 469 (LPYKIGVIGP…CQGGIDPALA (419 aa)). Cys104 and Cys132 are disulfide-bonded. Residues 470 to 490 (MMVCFALLIALLSINGFAYFI) form a helical membrane-spanning segment. The Cytoplasmic segment spans residues 491–1108 (RRRINKIQLI…AERQLVRNKP (618 aa)). The Protein kinase domain occupies 532–812 (FQIISEVQSG…DEIFNQFKTF (281 aa)). The Guanylate cyclase domain occupies 884 to 1014 (TLYFSDIVGF…DTVNTASRME (131 aa)).

It belongs to the adenylyl cyclase class-4/guanylyl cyclase family. In terms of assembly, homodimer. Interacts with RD3; promotes the exit of GUCY2F from the endoplasmic reticulum and its trafficking to the photoreceptor outer segments. Post-translationally, there are 9 conserved cysteine residues in sensory guanylate cyclases, 6 in the extracellular domain, which may be involved in intra- or interchain disulfide bonds. Retina.

Its subcellular location is the membrane. It localises to the photoreceptor outer segment membrane. The catalysed reaction is GTP = 3',5'-cyclic GMP + diphosphate. Activated by GUCA1B when free calcium ions concentration is low, and inhibited by GUCA1B when free calcium ions concentration is high. Inhibited by RD3. Responsible for the synthesis of cyclic GMP (cGMP) in rods and cones of photoreceptors. Plays an essential role in phototransduction, by mediating cGMP replenishment. May also participate in the trafficking of membrane-asociated proteins to the photoreceptor outer segment membrane. The chain is Retinal guanylyl cyclase 2 from Mus musculus (Mouse).